Consider the following 230-residue polypeptide: 2-C-methyl-D-erythritol 4-phosphate cytidylyltransferase (230 aa).

This sequence belongs to the IspD/TarI cytidylyltransferase family. IspD subfamily.

It catalyses the reaction 2-C-methyl-D-erythritol 4-phosphate + CTP + H(+) = 4-CDP-2-C-methyl-D-erythritol + diphosphate. It functions in the pathway isoprenoid biosynthesis; isopentenyl diphosphate biosynthesis via DXP pathway; isopentenyl diphosphate from 1-deoxy-D-xylulose 5-phosphate: step 2/6. In terms of biological role, catalyzes the formation of 4-diphosphocytidyl-2-C-methyl-D-erythritol from CTP and 2-C-methyl-D-erythritol 4-phosphate (MEP). This chain is 2-C-methyl-D-erythritol 4-phosphate cytidylyltransferase, found in Nocardia farcinica (strain IFM 10152).